Consider the following 288-residue polypeptide: Bifunctional protein FolD (288 aa).

NADP(+)-binding positions include 166 to 168 (GAS) and I232.

Belongs to the tetrahydrofolate dehydrogenase/cyclohydrolase family. Homodimer.

The catalysed reaction is (6R)-5,10-methylene-5,6,7,8-tetrahydrofolate + NADP(+) = (6R)-5,10-methenyltetrahydrofolate + NADPH. It carries out the reaction (6R)-5,10-methenyltetrahydrofolate + H2O = (6R)-10-formyltetrahydrofolate + H(+). Its pathway is one-carbon metabolism; tetrahydrofolate interconversion. In terms of biological role, catalyzes the oxidation of 5,10-methylenetetrahydrofolate to 5,10-methenyltetrahydrofolate and then the hydrolysis of 5,10-methenyltetrahydrofolate to 10-formyltetrahydrofolate. The protein is Bifunctional protein FolD of Salmonella enteritidis PT4 (strain P125109).